The primary structure comprises 208 residues: MISDIEFALSEHNFQFAYKDLQKINLYIKRILLLNTRFNLISNSNSNFNSILNLHVIDSLLGLSTVKEINPSEVLDVGSGAGFPGIILAIFDSSRKYYLLERSKKKSTFLKMIKLELDLENVKILEYEIEKEKKKYEFITIRAFRNMNEYALILKNLLKGGGLIMAYKGKFDRINLEVNQIKNLFSKIEVKSLNSKLRVDRNLVLLYR.

S-adenosyl-L-methionine contacts are provided by residues Gly-78, Phe-83, 101–103, 129–130, and Arg-142; these read ERS and IE.

It belongs to the methyltransferase superfamily. RNA methyltransferase RsmG family.

It is found in the cytoplasm. In terms of biological role, specifically methylates the N7 position of a guanine in 16S rRNA. In Borreliella burgdorferi (strain ATCC 35210 / DSM 4680 / CIP 102532 / B31) (Borrelia burgdorferi), this protein is Ribosomal RNA small subunit methyltransferase G.